The primary structure comprises 562 residues: Dihydroxy-acid dehydratase (562 aa).

Asp80 contributes to the Mg(2+) binding site. Cys121 contributes to the [2Fe-2S] cluster binding site. Mg(2+) is bound by residues Asp122 and Lys123. Lys123 carries the N6-carboxylysine modification. Cys194 serves as a coordination point for [2Fe-2S] cluster. Mg(2+) is bound at residue Glu446. The active-site Proton acceptor is the Ser472.

Belongs to the IlvD/Edd family. As to quaternary structure, homodimer. It depends on [2Fe-2S] cluster as a cofactor. Mg(2+) is required as a cofactor.

The enzyme catalyses (2R)-2,3-dihydroxy-3-methylbutanoate = 3-methyl-2-oxobutanoate + H2O. It catalyses the reaction (2R,3R)-2,3-dihydroxy-3-methylpentanoate = (S)-3-methyl-2-oxopentanoate + H2O. It functions in the pathway amino-acid biosynthesis; L-isoleucine biosynthesis; L-isoleucine from 2-oxobutanoate: step 3/4. It participates in amino-acid biosynthesis; L-valine biosynthesis; L-valine from pyruvate: step 3/4. Functions in the biosynthesis of branched-chain amino acids. Catalyzes the dehydration of (2R,3R)-2,3-dihydroxy-3-methylpentanoate (2,3-dihydroxy-3-methylvalerate) into 2-oxo-3-methylpentanoate (2-oxo-3-methylvalerate) and of (2R)-2,3-dihydroxy-3-methylbutanoate (2,3-dihydroxyisovalerate) into 2-oxo-3-methylbutanoate (2-oxoisovalerate), the penultimate precursor to L-isoleucine and L-valine, respectively. The protein is Dihydroxy-acid dehydratase of Staphylococcus epidermidis (strain ATCC 35984 / DSM 28319 / BCRC 17069 / CCUG 31568 / BM 3577 / RP62A).